Consider the following 490-residue polypeptide: tRNA-2-methylthio-N(6)-dimethylallyladenosine synthase (490 aa).

The MTTase N-terminal domain occupies K37–T154. 6 residues coordinate [4Fe-4S] cluster: C46, C83, C117, C198, C202, and C205. One can recognise a Radical SAM core domain in the interval K184–K416. One can recognise a TRAM domain in the interval E419–D487.

It belongs to the methylthiotransferase family. MiaB subfamily. Monomer. [4Fe-4S] cluster serves as cofactor.

It localises to the cytoplasm. The catalysed reaction is N(6)-dimethylallyladenosine(37) in tRNA + (sulfur carrier)-SH + AH2 + 2 S-adenosyl-L-methionine = 2-methylsulfanyl-N(6)-dimethylallyladenosine(37) in tRNA + (sulfur carrier)-H + 5'-deoxyadenosine + L-methionine + A + S-adenosyl-L-homocysteine + 2 H(+). In terms of biological role, catalyzes the methylthiolation of N6-(dimethylallyl)adenosine (i(6)A), leading to the formation of 2-methylthio-N6-(dimethylallyl)adenosine (ms(2)i(6)A) at position 37 in tRNAs that read codons beginning with uridine. In Psychrobacter sp. (strain PRwf-1), this protein is tRNA-2-methylthio-N(6)-dimethylallyladenosine synthase.